Here is a 418-residue protein sequence, read N- to C-terminus: Glutamyl-tRNA reductase (418 aa).

Residues 49 to 52 (TCNR), Ser109, 114 to 116 (EPQ), and Gln120 contribute to the substrate site. Cys50 functions as the Nucleophile in the catalytic mechanism. Residue 189–194 (GAGETI) participates in NADP(+) binding.

The protein belongs to the glutamyl-tRNA reductase family. Homodimer.

It catalyses the reaction (S)-4-amino-5-oxopentanoate + tRNA(Glu) + NADP(+) = L-glutamyl-tRNA(Glu) + NADPH + H(+). The protein operates within porphyrin-containing compound metabolism; protoporphyrin-IX biosynthesis; 5-aminolevulinate from L-glutamyl-tRNA(Glu): step 1/2. Its function is as follows. Catalyzes the NADPH-dependent reduction of glutamyl-tRNA(Glu) to glutamate 1-semialdehyde (GSA). This Klebsiella pneumoniae (strain 342) protein is Glutamyl-tRNA reductase.